A 180-amino-acid chain; its full sequence is Uterocalin (180 aa).

An N-terminal signal peptide occupies residues 1 to 18; sequence MNLLLLAMGLILPRRPHA. A disulfide bridge links C82 with C175. Residue N101 is glycosylated (N-linked (GlcNAc...) asparagine).

This sequence belongs to the calycin superfamily. Lipocalin family. As to expression, expressed in glandular and lumenal epithelia of the endometrium. Is transferred to the embryonic capsule, the conceptus and the yolk sac.

The protein localises to the secreted. Binds fatty acids and retinol. Is specialized for the preattachment embryo. May be important to maintain the pregnancy and may transport small hydrophobic ligands from mother to the developing embryo. The polypeptide is Uterocalin (Equus caballus (Horse)).